Reading from the N-terminus, the 151-residue chain is uncharacterized protein (151 aa).

A coiled-coil region spans residues 35-147; that stretch reads GIFENERQKL…RETLQESLED (113 aa).

This is an uncharacterized protein from Helicobacter hepaticus (strain ATCC 51449 / 3B1).